A 296-amino-acid polypeptide reads, in one-letter code: Haloalkane dehalogenase (296 aa).

The region spanning P31–R155 is the AB hydrolase-1 domain. D108 (nucleophile) is an active-site residue. The Proton donor role is filled by E132. H272 (proton acceptor) is an active-site residue.

This sequence belongs to the haloalkane dehalogenase family. Type 2 subfamily. As to quaternary structure, monomer.

It localises to the periplasm. The enzyme catalyses 1-haloalkane + H2O = a halide anion + a primary alcohol + H(+). The catalysed reaction is (3R,6R)-1,3,4,6-tetrachlorocyclohexa-1,4-diene + 2 H2O = 2,5-dichlorocyclohexa-2,5-dien-1,4-diol + 2 chloride + 2 H(+). It participates in xenobiotic degradation; gamma-hexachlorocyclohexane degradation. Functionally, catalyzes hydrolytic cleavage of carbon-halogen bonds in halogenated aliphatic compounds, leading to the formation of the corresponding primary alcohols, halide ions and protons. Is involved in the degradation of the important environmental pollutant gamma-hexachlorocyclohexane (gamma-HCH or lindane) as it also catalyzes conversion of 1,3,4,6-tetrachloro-1,4-cyclohexadiene (1,4-TCDN) to 2,5-dichloro-2,5-cyclohexadiene-1,4-diol (2,5-DDOL) via the intermediate 2,4,5-trichloro-2,5-cyclohexadiene-1-ol (2,4,5-DNOL). The sequence is that of Haloalkane dehalogenase from Sphingobium indicum (strain DSM 16412 / CCM 7286 / MTCC 6364 / B90A).